Reading from the N-terminus, the 585-residue chain is Aspartate--tRNA ligase (585 aa).

Glutamate 171 contributes to the L-aspartate binding site. Positions glutamine 195–lysine 198 are aspartate. Arginine 217 serves as a coordination point for L-aspartate. Residues arginine 217–glutamate 219 and glutamine 226 each bind ATP. Histidine 448 is a binding site for L-aspartate. Glutamate 482 lines the ATP pocket. Arginine 489 provides a ligand contact to L-aspartate. Residue glycine 534–arginine 537 coordinates ATP.

The protein belongs to the class-II aminoacyl-tRNA synthetase family. Type 1 subfamily. Homodimer.

It is found in the cytoplasm. The catalysed reaction is tRNA(Asp) + L-aspartate + ATP = L-aspartyl-tRNA(Asp) + AMP + diphosphate. Its function is as follows. Catalyzes the attachment of L-aspartate to tRNA(Asp) in a two-step reaction: L-aspartate is first activated by ATP to form Asp-AMP and then transferred to the acceptor end of tRNA(Asp). The protein is Aspartate--tRNA ligase of Histophilus somni (strain 129Pt) (Haemophilus somnus).